The chain runs to 103 residues: Large ribosomal subunit protein bL21 (103 aa).

It belongs to the bacterial ribosomal protein bL21 family. In terms of assembly, part of the 50S ribosomal subunit. Contacts protein L20.

In terms of biological role, this protein binds to 23S rRNA in the presence of protein L20. This is Large ribosomal subunit protein bL21 from Teredinibacter turnerae (strain ATCC 39867 / T7901).